The chain runs to 482 residues: GTPase Obg (482 aa).

Residues 2 to 159 enclose the Obg domain; that stretch reads PRFIDRVVVH…RELTLELKTV (158 aa). Residues 160–341 form the OBG-type G domain; it reads ADVGLVGFPS…LIFALWDMVA (182 aa). GTP-binding positions include 166–173, 191–195, 212–215, 292–295, and 322–324; these read GFPSAGKS, FTTLA, DVPG, NKID, and STV. Residues S173 and T193 each contribute to the Mg(2+) site. Residues 359-437 form the OCT domain; sequence PIPVDETAFS…IGDMTFDWEP (79 aa). Residues 450 to 482 are disordered; that stretch reads RGTDVRLEQTDRVGADERKAARKARRQSDDGEE. The segment covering 452–468 has biased composition (basic and acidic residues); that stretch reads TDVRLEQTDRVGADERK.

This sequence belongs to the TRAFAC class OBG-HflX-like GTPase superfamily. OBG GTPase family. In terms of assembly, monomer. Requires Mg(2+) as cofactor.

It localises to the cytoplasm. In terms of biological role, an essential GTPase which binds GTP, GDP and possibly (p)ppGpp with moderate affinity, with high nucleotide exchange rates and a fairly low GTP hydrolysis rate. Plays a role in control of the cell cycle, stress response, ribosome biogenesis and in those bacteria that undergo differentiation, in morphogenesis control. The sequence is that of GTPase Obg from Mycolicibacterium gilvum (strain PYR-GCK) (Mycobacterium gilvum (strain PYR-GCK)).